Reading from the N-terminus, the 334-residue chain is HTH-type transcriptional regulator RegA (334 aa).

In terms of domain architecture, HTH lacI-type spans Met1 to Thr57. The H-T-H motif DNA-binding region spans Ile5–Asn24.

Functionally, involved in the regulation of amylase production. This Clostridium acetobutylicum (strain ATCC 824 / DSM 792 / JCM 1419 / IAM 19013 / LMG 5710 / NBRC 13948 / NRRL B-527 / VKM B-1787 / 2291 / W) protein is HTH-type transcriptional regulator RegA (regA).